Here is a 1234-residue protein sequence, read N- to C-terminus: 1-phosphatidylinositol 4,5-bisphosphate phosphodiesterase beta-3 (1234 aa).

Alanine 2 bears the N-acetylalanine mark. Residues 318–468 form the PI-PLC X-box domain; the sequence is DMTQPLSAYF…LMGRILVKNK (151 aa). Residues histidine 332 and histidine 379 contribute to the active site. The segment at 467–587 is disordered; the sequence is NKKRHRPSAG…GTASSEVNAT (121 aa). Phosphoserine occurs at positions 474, 490, 495, and 537. The segment covering 488 to 515 has biased composition (low complexity); the sequence is EQSNSALSESSAATEPSSPQLGSPSSDS. Acidic residues predominate over residues 555–567; sequence REDEEEDEEEEEQ. Polar residues predominate over residues 576 to 587; sequence DEGTASSEVNAT. Residues 590–706 form the PI-PLC Y-box domain; sequence MSTLVNYIEP…GYLLKPEFMR (117 aa). A C2 domain is found at 707–835; that stretch reads RPDKSFDPFT…RNEANQPLCL (129 aa). A compositionally biased stretch (polar residues) spans 887-908; the sequence is AGQETCQDTQSQQLGSQPSSNP. Positions 887-937 are disordered; sequence AGQETCQDTQSQQLGSQPSSNPTPSPLDASPRRPPGPTTSPASTSLSSPGQ. The segment covering 925 to 936 has biased composition (low complexity); it reads TSPASTSLSSPG. Serine 926 and serine 1105 each carry phosphoserine. The segment at 1198–1234 is disordered; it reads GLGDGPLVACASNGHAPGSSGHLSGADSESQEENTQL. Residues 1231–1234 are interaction with SHANK2; sequence NTQL.

In terms of assembly, interacts with SHANK2. Interacts with LPAR2. Ca(2+) is required as a cofactor.

The protein localises to the cytoplasm. It is found in the membrane. Its subcellular location is the nucleus. It carries out the reaction a 1,2-diacyl-sn-glycero-3-phospho-(1D-myo-inositol-4,5-bisphosphate) + H2O = 1D-myo-inositol 1,4,5-trisphosphate + a 1,2-diacyl-sn-glycerol + H(+). The enzyme catalyses a 1,2-diacyl-sn-glycero-3-phospho-(1D-myo-inositol) + H2O = 1D-myo-inositol 1-phosphate + a 1,2-diacyl-sn-glycerol + H(+). Activated by G(q)/G(11) G alpha proteins in response to ligand-binding to G protein-coupled receptors. Functionally, catalyzes the production of the second messenger molecules diacylglycerol (DAG) and inositol 1,4,5-trisphosphate (IP3). Key transducer of G protein-coupled receptor signaling: activated by G(q)/G(11) G alpha proteins downstream of G protein-coupled receptors activation. In neutrophils, participates in a phospholipase C-activating N-formyl peptide-activated GPCR (G protein-coupled receptor) signaling pathway by promoting RASGRP4 activation by DAG, to promote neutrophil functional responses. The polypeptide is 1-phosphatidylinositol 4,5-bisphosphate phosphodiesterase beta-3 (Homo sapiens (Human)).